Consider the following 434-residue polypeptide: Probable phosphatidylinositol 3,4,5-trisphosphate 3-phosphatase TEP1 (434 aa).

In terms of domain architecture, Phosphatase tensin-type spans 33-255 (KTKNDIGLRL…RYHEFFITHE (223 aa)). The active-site Phosphocysteine intermediate is the Cys193.

It carries out the reaction a 1,2-diacyl-sn-glycero-3-phospho-(1D-myo-inositol-3,4,5-trisphosphate) + H2O = a 1,2-diacyl-sn-glycero-3-phospho-(1D-myo-inositol-4,5-bisphosphate) + phosphate. May act as a phosphoinositide 3-phosphatase by regulating PtdIns(3,4,5)P3 levels. The chain is Probable phosphatidylinositol 3,4,5-trisphosphate 3-phosphatase TEP1 (TEP1) from Saccharomyces cerevisiae (strain ATCC 204508 / S288c) (Baker's yeast).